Reading from the N-terminus, the 592-residue chain is Probable auxin efflux carrier component 1c (592 aa).

The Extracellular segment spans residues M1–D6. Residues F7–S27 form a helical membrane-spanning segment. Residues V28–Q38 are Cytoplasmic-facing. Residues C39 to I59 form a helical membrane-spanning segment. Residue V51 participates in (indol-3-yl)acetate binding. Topologically, residues S60–R70 are extracellular. The chain crosses the membrane as a helical span at residues F71–H91. Over L92–W100 the chain is Cytoplasmic. Residues T101–L121 form a helical membrane-spanning segment. Residues N112 and L114 each coordinate (indol-3-yl)acetate. At K122–S131 the chain is on the extracellular side. Residues L132–F152 traverse the membrane as a helical segment. Residue Y145 participates in (indol-3-yl)acetate binding. The Cytoplasmic segment spans residues E153–S452. Disordered stretches follow at residues R214 to T236 and G282 to E331. The segment covering G224–T236 has biased composition (polar residues). The segment covering A309–P318 has biased composition (pro residues). A helical transmembrane segment spans residues L453–I473. At L474–S476 the chain is on the extracellular side. Residues I477–A497 traverse the membrane as a helical segment. Residues L498–T511 lie on the Cytoplasmic side of the membrane. The helical transmembrane segment at F512–V532 threads the bilayer. At G533 to T537 the chain is on the extracellular side. The helical transmembrane segment at L538–A558 threads the bilayer. (indol-3-yl)acetate-binding residues include I552 and V553. At K559–A571 the chain is on the cytoplasmic side. A helical membrane pass occupies residues V572 to L592.

The protein belongs to the auxin efflux carrier (TC 2.A.69.1) family. Homodimer. As to expression, expressed at low levels in roots and leaves. Expressed in roots, stem bases, stems, leaves and young panicles.

The protein localises to the membrane. Functionally, may act as a component of the auxin efflux carrier. The protein is Probable auxin efflux carrier component 1c of Oryza sativa subsp. japonica (Rice).